We begin with the raw amino-acid sequence, 465 residues long: Antithrombin-III (465 aa).

A signal peptide spans 1–32 (MISNGIGTVTTGKRSMCLFPLLLIGLWGCVTC). 2 disulfides stabilise this stretch: Cys-41-Cys-161 and Cys-54-Cys-128. Thr-64 carries the post-translational modification Phosphothreonine. Ser-69 is modified (phosphoserine). Trp-82 is a binding site for heparin. A glycan (N-linked (GlcNAc...) asparagine) is linked at Asn-129. Arg-162 contributes to the heparin binding site. Asn-168 carries N-linked (GlcNAc...) asparagine glycosylation. Residue Arg-178 coordinates heparin. Asn-188 and Asn-225 each carry an N-linked (GlcNAc...) asparagine glycan. Cysteines 280 and 463 form a disulfide.

Belongs to the serpin family. In terms of assembly, forms protease inhibiting heterodimer with TMPRSS7. Phosphorylated by FAM20C in the extracellular medium. Plasma.

It localises to the secreted. The protein localises to the extracellular space. In terms of biological role, most important serine protease inhibitor in plasma that regulates the blood coagulation cascade. AT-III inhibits thrombin, matriptase-3/TMPRSS7, as well as factors IXa, Xa and XIa. Its inhibitory activity is greatly enhanced in the presence of heparin. This Ovis aries (Sheep) protein is Antithrombin-III (SERPINC1).